A 723-amino-acid chain; its full sequence is DNA-binding protein RFX2 (723 aa).

The disordered stretch occupies residues 1–46 (MQNSEGGADSPASVALRPSAAAPPVPASPQRVLVQAASSNPKGAQM). The segment covering 10-20 (SPASVALRPSA) has biased composition (low complexity). At Ser28 the chain carries Phosphoserine. The RFX-type winged-helix DNA-binding region spans 199-274 (HLQWLLDNYE…YHYYGIRLKP (76 aa)). The segment at 292–332 (QQPMHQKPRYRPAQKTDSLGDSGSHSGLHSTPEQTMAVQSQ) is disordered. The span at 308-321 (DSLGDSGSHSGLHS) shows a compositional bias: low complexity. Residues 322–332 (TPEQTMAVQSQ) show a composition bias toward polar residues. The residue at position 416 (Ser416) is a Phosphoserine. The tract at residues 688–723 (MGDEQRGSEAGPDARSLGEPLVKRERSDPNHSLQGI) is disordered.

This sequence belongs to the RFX family. In terms of assembly, homodimer; probably only forms homodimers in testis. Heterodimer; heterodimerizes with RFX1 and RFX3.

Its subcellular location is the nucleus. It localises to the cytoplasm. Functionally, transcription factor that acts as a key regulator of spermatogenesis. Acts by regulating expression of genes required for the haploid phase during spermiogenesis, such as genes required for cilium assembly and function. Recognizes and binds the X-box, a regulatory motif with DNA sequence 5'-GTNRCC(0-3N)RGYAAC-3' present on promoters. Probably activates transcription of the testis-specific histone gene H1-6. This chain is DNA-binding protein RFX2 (RFX2), found in Homo sapiens (Human).